A 247-amino-acid chain; its full sequence is Large ribosomal subunit protein uL3 (247 aa).

Disordered stretches follow at residues 140 to 164 (SHRS…KMPG) and 212 to 247 (LPKE…KEGA). Residue Q151 is modified to N5-methylglutamine. Positions 232–247 (DEDKAPADTPAEKEGA) are enriched in basic and acidic residues.

Belongs to the universal ribosomal protein uL3 family. As to quaternary structure, part of the 50S ribosomal subunit. Forms a cluster with proteins L14 and L19. Post-translationally, methylated by PrmB.

One of the primary rRNA binding proteins, it binds directly near the 3'-end of the 23S rRNA, where it nucleates assembly of the 50S subunit. This Nitrobacter winogradskyi (strain ATCC 25391 / DSM 10237 / CIP 104748 / NCIMB 11846 / Nb-255) protein is Large ribosomal subunit protein uL3.